The following is a 151-amino-acid chain: D-aminoacyl-tRNA deacylase (151 aa).

The Gly-cisPro motif, important for rejection of L-amino acids motif lies at 137–138 (GP).

The protein belongs to the DTD family. As to quaternary structure, homodimer.

It localises to the cytoplasm. The enzyme catalyses glycyl-tRNA(Ala) + H2O = tRNA(Ala) + glycine + H(+). The catalysed reaction is a D-aminoacyl-tRNA + H2O = a tRNA + a D-alpha-amino acid + H(+). In terms of biological role, an aminoacyl-tRNA editing enzyme that deacylates mischarged D-aminoacyl-tRNAs. Also deacylates mischarged glycyl-tRNA(Ala), protecting cells against glycine mischarging by AlaRS. Acts via tRNA-based rather than protein-based catalysis; rejects L-amino acids rather than detecting D-amino acids in the active site. By recycling D-aminoacyl-tRNA to D-amino acids and free tRNA molecules, this enzyme counteracts the toxicity associated with the formation of D-aminoacyl-tRNA entities in vivo and helps enforce protein L-homochirality. The polypeptide is D-aminoacyl-tRNA deacylase (Fusobacterium nucleatum subsp. nucleatum (strain ATCC 25586 / DSM 15643 / BCRC 10681 / CIP 101130 / JCM 8532 / KCTC 2640 / LMG 13131 / VPI 4355)).